Reading from the N-terminus, the 350-residue chain is ATPase GET3 (350 aa).

Position 26–33 (26–33 (KGGVGKTT)) interacts with ATP. Asp57 is an active-site residue. ATP-binding residues include Glu243 and Asn270. Zn(2+) contacts are provided by Cys282 and Cys285.

This sequence belongs to the arsA ATPase family. In terms of assembly, homodimer. Component of the Golgi to ER traffic (GET) complex, which is composed of GET1, GET2 and GET3. Within the complex, GET1 and GET2 form a heterotetramer which is stabilized by phosphatidylinositol binding and which binds to the GET3 homodimer. Interacts with the chloride channel protein GEF1.

Its subcellular location is the cytoplasm. The protein resides in the endoplasmic reticulum. It localises to the golgi apparatus. ATPase required for the post-translational delivery of tail-anchored (TA) proteins to the endoplasmic reticulum. Recognizes and selectively binds the transmembrane domain of TA proteins in the cytosol. This complex then targets to the endoplasmic reticulum by membrane-bound receptors GET1 and GET2, where the tail-anchored protein is released for insertion. This process is regulated by ATP binding and hydrolysis. ATP binding drives the homodimer towards the closed dimer state, facilitating recognition of newly synthesized TA membrane proteins. ATP hydrolysis is required for insertion. Subsequently, the homodimer reverts towards the open dimer state, lowering its affinity for the GET1-GET2 receptor, and returning it to the cytosol to initiate a new round of targeting. Cooperates with the HDEL receptor ERD2 to mediate the ATP-dependent retrieval of resident ER proteins that contain a C-terminal H-D-E-L retention signal from the Golgi to the ER. Involved in low-level resistance to the oxyanions arsenite and arsenate, and in heat tolerance. This chain is ATPase GET3, found in Candida albicans (strain SC5314 / ATCC MYA-2876) (Yeast).